The sequence spans 533 residues: T-complex protein 1 subunit delta (533 aa).

The span at 1 to 15 (MAQSQVGKGSPSNAT) shows a compositional bias: polar residues. The interval 1-25 (MAQSQVGKGSPSNATFRDKEKPQEV) is disordered. Residues 16-25 (FRDKEKPQEV) show a composition bias toward basic and acidic residues.

Belongs to the TCP-1 chaperonin family. Heterooligomeric complex of about 850 to 900 kDa that forms two stacked rings, 12 to 16 nm in diameter.

It is found in the cytoplasm. Its function is as follows. Molecular chaperone; assists the folding of proteins upon ATP hydrolysis. Known to play a role, in vitro, in the folding of actin and tubulin. The polypeptide is T-complex protein 1 subunit delta (CCT4) (Debaryomyces hansenii (strain ATCC 36239 / CBS 767 / BCRC 21394 / JCM 1990 / NBRC 0083 / IGC 2968) (Yeast)).